Here is a 164-residue protein sequence, read N- to C-terminus: UPF0304 protein KPK_1463 (164 aa).

The protein belongs to the UPF0304 family.

This is UPF0304 protein KPK_1463 from Klebsiella pneumoniae (strain 342).